The primary structure comprises 469 residues: MMKNRVSNIHFVGIGGVGMSGIAEVLHNLGFKVSGSDQARNAATEHLSSLGIQVYPGHTAEHVNGADVVVASTAVKKENPEVVAALERQIPVIPRALMLAELMRFRDGIAIAGTHGKTTTTSLTASILGAAGLDPTFVIGGKLNAAGTNARLGKGEYIVAEADESDASFLHLTPIMSVVTNIDEDHMDTYGHSVEKLHQAFIDFIHRMPFYGKAFLCVDSEHVRAILPKVSKPYATYGLDDTADIYATDIENVGAQMKFTVHVQMKGHEQGSFEVVLNMPGRHNVLNALAAIGVALEVGASVEAIQKGLLGFEGVGRRFQKYGDIKLPNGGTALLVDDYGHHPVEMAATLAAARGAYPEKRLVLAFQPHRYTRTRDLFEDFTKVLNTVDALVLTEVYAAGEEPVAAADSRALARAIRVLGKLEPIYCENVADLPQMLMNVLQDGDVVLNMGAGSINRVPSALLELSKQI.

113 to 119 (GTHGKTT) provides a ligand contact to ATP.

This sequence belongs to the MurCDEF family.

The protein localises to the cytoplasm. It catalyses the reaction UDP-N-acetyl-alpha-D-muramate + L-alanine + ATP = UDP-N-acetyl-alpha-D-muramoyl-L-alanine + ADP + phosphate + H(+). It participates in cell wall biogenesis; peptidoglycan biosynthesis. Its function is as follows. Cell wall formation. This chain is UDP-N-acetylmuramate--L-alanine ligase, found in Neisseria gonorrhoeae (strain ATCC 700825 / FA 1090).